Consider the following 179-residue polypeptide: Large ribosomal subunit protein uL5 (179 aa).

This sequence belongs to the universal ribosomal protein uL5 family. Part of the 50S ribosomal subunit; part of the 5S rRNA/L5/L18/L25 subcomplex. Contacts the 5S rRNA and the P site tRNA. Forms a bridge to the 30S subunit in the 70S ribosome.

Its function is as follows. This is one of the proteins that bind and probably mediate the attachment of the 5S RNA into the large ribosomal subunit, where it forms part of the central protuberance. In the 70S ribosome it contacts protein S13 of the 30S subunit (bridge B1b), connecting the 2 subunits; this bridge is implicated in subunit movement. Contacts the P site tRNA; the 5S rRNA and some of its associated proteins might help stabilize positioning of ribosome-bound tRNAs. The sequence is that of Large ribosomal subunit protein uL5 from Vibrio cholerae serotype O1 (strain ATCC 39541 / Classical Ogawa 395 / O395).